Consider the following 315-residue polypeptide: Ribose-phosphate pyrophosphokinase (315 aa).

Residues 37–39 (DGE) and 96–97 (RQ) contribute to the ATP site. Positions 131 and 171 each coordinate Mg(2+). Residue Lys-195 is part of the active site. D-ribose 5-phosphate-binding positions include Arg-197, Asp-221, and 225 to 229 (DTGGT).

This sequence belongs to the ribose-phosphate pyrophosphokinase family. Class I subfamily. Homohexamer. Mg(2+) is required as a cofactor.

The protein localises to the cytoplasm. It catalyses the reaction D-ribose 5-phosphate + ATP = 5-phospho-alpha-D-ribose 1-diphosphate + AMP + H(+). Its pathway is metabolic intermediate biosynthesis; 5-phospho-alpha-D-ribose 1-diphosphate biosynthesis; 5-phospho-alpha-D-ribose 1-diphosphate from D-ribose 5-phosphate (route I): step 1/1. In terms of biological role, involved in the biosynthesis of the central metabolite phospho-alpha-D-ribosyl-1-pyrophosphate (PRPP) via the transfer of pyrophosphoryl group from ATP to 1-hydroxyl of ribose-5-phosphate (Rib-5-P). The protein is Ribose-phosphate pyrophosphokinase of Haemophilus influenzae (strain ATCC 51907 / DSM 11121 / KW20 / Rd).